A 469-amino-acid chain; its full sequence is Glutamate--tRNA ligase (469 aa).

The 'HIGH' region signature appears at 11 to 21 (PSPTGFIHLGN). Residues 118 to 131 (GEKPRYDGTWRPEP) are compositionally biased toward basic and acidic residues. Residues 118–139 (GEKPRYDGTWRPEPGKVLPEPP) form a disordered region. Positions 243–247 (KMSKR) match the 'KMSKS' region motif. K246 contacts ATP.

It belongs to the class-I aminoacyl-tRNA synthetase family. Glutamate--tRNA ligase type 1 subfamily. In terms of assembly, monomer.

The protein resides in the cytoplasm. It carries out the reaction tRNA(Glu) + L-glutamate + ATP = L-glutamyl-tRNA(Glu) + AMP + diphosphate. Functionally, catalyzes the attachment of glutamate to tRNA(Glu) in a two-step reaction: glutamate is first activated by ATP to form Glu-AMP and then transferred to the acceptor end of tRNA(Glu). This is Glutamate--tRNA ligase from Burkholderia pseudomallei (strain 1106a).